The chain runs to 365 residues: S-adenosylmethionine:tRNA ribosyltransferase-isomerase (365 aa).

This sequence belongs to the QueA family. In terms of assembly, monomer.

The protein localises to the cytoplasm. It carries out the reaction 7-aminomethyl-7-carbaguanosine(34) in tRNA + S-adenosyl-L-methionine = epoxyqueuosine(34) in tRNA + adenine + L-methionine + 2 H(+). Its pathway is tRNA modification; tRNA-queuosine biosynthesis. Its function is as follows. Transfers and isomerizes the ribose moiety from AdoMet to the 7-aminomethyl group of 7-deazaguanine (preQ1-tRNA) to give epoxyqueuosine (oQ-tRNA). In Rickettsia rickettsii (strain Iowa), this protein is S-adenosylmethionine:tRNA ribosyltransferase-isomerase.